A 103-amino-acid chain; its full sequence is Histone H4 (103 aa).

Over residues 1–14 the composition is skewed to gly residues; it reads MSGRGKGGKGLGKG. Residues 1–20 are disordered; the sequence is MSGRGKGGKGLGKGGAKRHR. The residue at position 2 (serine 2) is an N-acetylserine. Lysine 6 and lysine 13 each carry N6-acetyl-N6-methyllysine; alternate. An N6-acetyllysine modification is found at lysine 17. A DNA-binding region spans residues 17 to 21; the sequence is KRHRK. N6-methyllysine is present on lysine 21.

The protein belongs to the histone H4 family. The nucleosome is a histone octamer containing two molecules each of H2A, H2B, H3 and H4 assembled in one H3-H4 heterotetramer and two H2A-H2B heterodimers. The octamer wraps approximately 147 bp of DNA.

The protein resides in the nucleus. It localises to the chromosome. Functionally, core component of nucleosome. Nucleosomes wrap and compact DNA into chromatin, limiting DNA accessibility to the cellular machineries which require DNA as a template. Histones thereby play a central role in transcription regulation, DNA repair, DNA replication and chromosomal stability. DNA accessibility is regulated via a complex set of post-translational modifications of histones, also called histone code, and nucleosome remodeling. The protein is Histone H4 of Ascaris suum (Pig roundworm).